The following is a 681-amino-acid chain: DNA-directed RNA polymerase subunit beta' (681 aa).

Zn(2+) is bound by residues Cys69, Cys71, Cys87, and Cys90. 3 residues coordinate Mg(2+): Asp489, Asp491, and Asp493.

Belongs to the RNA polymerase beta' chain family. RpoC1 subfamily. In plastids the minimal PEP RNA polymerase catalytic core is composed of four subunits: alpha, beta, beta', and beta''. When a (nuclear-encoded) sigma factor is associated with the core the holoenzyme is formed, which can initiate transcription. It depends on Mg(2+) as a cofactor. Zn(2+) is required as a cofactor.

Its subcellular location is the plastid. It is found in the chloroplast. It catalyses the reaction RNA(n) + a ribonucleoside 5'-triphosphate = RNA(n+1) + diphosphate. DNA-dependent RNA polymerase catalyzes the transcription of DNA into RNA using the four ribonucleoside triphosphates as substrates. The chain is DNA-directed RNA polymerase subunit beta' from Atropa belladonna (Belladonna).